The following is a 1233-amino-acid chain: Insulin receptor substrate 1 (1233 aa).

At S3 the chain carries Phosphoserine. The mediates interaction with PHIP stretch occupies residues 3–133 (SPPDTDGFSD…AGGGCGGSCS (131 aa)). The region spanning 12–115 (DVRKVGYLRK…WYQALLQLHN (104 aa)) is the PH domain. S99 carries the post-translational modification Phosphoserine; by CK2. Residues 155-259 (FKEVWQVILK…EAMRAMSDEF (105 aa)) form the IRS-type PTB domain. The disordered stretch occupies residues 257-425 (DEFRPRSKSQ…SDGGFISSDE (169 aa)). Positions 264 to 276 (KSQSSSSCSNPIS) are enriched in low complexity. A phosphoserine; by RPS6KB1 mark is found at S265 and S302. A Phosphoserine; by IKKB, MAPK8 and RPS6KB1 modification is found at S307. Phosphoserine is present on residues S318, S325, S340, and S343. Basic residues predominate over residues 349 to 358 (THAHRHRGSS). Low complexity-rich tracts occupy residues 378–399 (SPSATSPVSLSSSSTSGHGSTS) and 407–419 (SSASVSGSPSDGG). The residue at position 414 (S414) is a Phosphoserine. Residues T441 and T448 each carry the phosphothreonine modification. Residue Y460 is modified to Phosphotyrosine; by INSR. Positions 460–463 (YICM) match the YXXM motif 1 motif. The residue at position 522 (S522) is a Phosphoserine; by RPS6KB1. Short sequence motifs (YXXM motif) lie at residues 546-549 (YTEM) and 608-611 (YMPM). Position 608 is a phosphotyrosine; by INSR (Y608). S612 carries the post-translational modification Phosphoserine. Y628 is modified (phosphotyrosine; by INSR). The YXXM motif 4 motif lies at 628 to 631 (YMPM). Residue S632 is modified to Phosphoserine; by RPS6KB1 and ROCK2. The tract at residues 651–720 (QRVDPNGYMM…PPVESGGGKL (70 aa)) is disordered. Position 658 is a phosphotyrosine (Y658). The YXXM motif 5 signature appears at 658 to 661 (YMMM). Low complexity predominate over residues 662–689 (SPSGSCSPDIGGGSSSSSSISAAPSGSS). The YXXM motif 6 signature appears at 727–730 (YMNM). Residues 766 to 985 (FKHTQRPGEP…VPNSRGDYMT (220 aa)) are disordered. The segment covering 771-780 (RPGEPEEGAR) has biased composition (basic and acidic residues). 2 stretches are compositionally biased toward low complexity: residues 785–794 (RLSSSSGRLR) and 801–810 (DSSSSTSSDS). S789 carries the phosphoserine; by AMPK and SIK2 modification. Residue S887 is modified to Phosphoserine. Phosphotyrosine; by INSR occurs at positions 891, 935, and 983. The tract at residues 891–893 (YVN) is GRB2-binding. 3 short sequence motifs (YXXM motif) span residues 935-938 (YMNM), 983-986 (YMTM), and 1006-1009 (YADM). A disordered region spans residues 1015 to 1137 (AEKASLPRPT…GSEDVKRHSS (123 aa)). Over residues 1032 to 1042 (STASSSASVTP) the composition is skewed to low complexity. Composition is skewed to polar residues over residues 1043 to 1052 (QGATAEQATH) and 1069 to 1081 (TRVNLSPNHNQSA). Residues S1096 and S1097 each carry the phosphoserine modification. Positions 1116 to 1129 (AAVGGSGGGGGGGS) are enriched in gly residues. At Y1173 the chain carries Phosphotyrosine; by INSR. The disordered stretch occupies residues 1178 to 1233 (LAKEHSQDCPSQQQSLPPPPPHQPLGSNEGNSPRRSSEDLSNYASISFQKQPEDRQ). K1180 participates in a covalent cross-link: Glycyl lysine isopeptide (Lys-Gly) (interchain with G-Cter in ubiquitin). Residues 1203-1227 (GSNEGNSPRRSSEDLSNYASISFQK) are compositionally biased toward polar residues. Y1220 is modified (phosphotyrosine; by INSR).

As to quaternary structure, interacts (via phosphorylated YXXM motifs) with PIK3R1. Interacts with ROCK1. Interacts with GRB2. Interacts with SOCS7. Interacts (via IRS-type PTB domain) with IGF1R and INSR (via the tyrosine-phosphorylated NPXY motif). Interacts with UBTF and PIK3CA. Interacts (via PH domain) with PHIP. Interacts with FER. Interacts with ALK. Interacts with EIF2AK2/PKR. Interacts with GKAP1. Interacts with DGKZ in the absence of insulin; insulin stimulation decreases this interaction. Found in a ternary complex with DGKZ and PIP5K1A in the absence of insulin stimulation. Interacts with SQSTM1; the interaction is disrupted by the presence of tensin TNS2. Interacts with NCK1 (via SH2 domain). Interacts with NCK2 (via SH3 domain). Interacts with SH2B1; this interaction enhances leptin-induced activation of the PI3-kinase pathway. Interacts with DVL2; this interaction promotes the Wnt/beta-catenin signaling pathway. Post-translationally, serine phosphorylation of IRS1 is a mechanism for insulin resistance. Ser-307 phosphorylation inhibits insulin action through disruption of IRS1 interaction with the insulin receptor. Phosphorylation of Tyr-891 is required for GRB2-binding. Phosphorylated by ALK. Phosphorylated at Ser-265, Ser-302, Ser-632 and Ser-1097 by RPS6KB1; phosphorylation induces accelerated degradation of IRS1. Phosphorylated on tyrosine residues in response to insulin. In skeletal muscles, dephosphorylated on Tyr-608 by TNS2 under anabolic conditions; dephosphorylation results in the proteasomal degradation of IRS1. Ubiquitinated by the Cul7-RING(FBXW8) complex in a mTOR-dependent manner, leading to its degradation: the Cul7-RING(FBXW8) complex recognizes and binds IRS1 previously phosphorylated by S6 kinase (RPS6KB1 or RPS6KB2). Ubiquitinated by TRAF4 through 'Lys-29' linkage; this ubiquitination regulates the interaction of IRS1 with IGFR and IRS1 tyrosine phosphorylation upon IGF1 stimulation. In terms of processing, S-nitrosylation at by BLVRB inhibits its activity. Expressed in osteoblasts, but not in osteoclasts.

The protein localises to the cytoplasm. It is found in the nucleus. Signaling adapter protein that participates in the signal transduction from two prominent receptor tyrosine kinases, insulin receptor/INSR and insulin-like growth factor I receptor/IGF1R. Plays therefore an important role in development, growth, glucose homeostasis as well as lipid metabolism. Upon phosphorylation by the insulin receptor, functions as a signaling scaffold that propagates insulin action through binding to SH2 domain-containing proteins including the p85 regulatory subunit of PI3K, NCK1, NCK2, GRB2 or SHP2. Recruitment of GRB2 leads to the activation of the guanine nucleotide exchange factor SOS1 which in turn triggers the Ras/Raf/MEK/MAPK signaling cascade. Activation of the PI3K/AKT pathway is responsible for most of insulin metabolic effects in the cell, and the Ras/Raf/MEK/MAPK is involved in the regulation of gene expression and in cooperation with the PI3K pathway regulates cell growth and differentiation. Acts a positive regulator of the Wnt/beta-catenin signaling pathway through suppression of DVL2 autophagy-mediated degradation leading to cell proliferation. The chain is Insulin receptor substrate 1 (Irs1) from Mus musculus (Mouse).